A 264-amino-acid polypeptide reads, in one-letter code: Type III pantothenate kinase (264 aa).

An ATP-binding site is contributed by 6–13; the sequence is DSGNSRLK. Substrate is bound by residues Tyr-92 and 99–102; that span reads GADR. Asp-101 serves as the catalytic Proton acceptor. Thr-127 serves as a coordination point for ATP. Residue Thr-177 coordinates substrate.

It belongs to the type III pantothenate kinase family. In terms of assembly, homodimer. Requires NH4(+) as cofactor. The cofactor is K(+).

It is found in the cytoplasm. It catalyses the reaction (R)-pantothenate + ATP = (R)-4'-phosphopantothenate + ADP + H(+). The protein operates within cofactor biosynthesis; coenzyme A biosynthesis; CoA from (R)-pantothenate: step 1/5. Functionally, catalyzes the phosphorylation of pantothenate (Pan), the first step in CoA biosynthesis. In Bordetella petrii (strain ATCC BAA-461 / DSM 12804 / CCUG 43448), this protein is Type III pantothenate kinase.